Here is a 148-residue protein sequence, read N- to C-terminus: Large ribosomal subunit protein bL9 (148 aa).

Belongs to the bacterial ribosomal protein bL9 family.

Binds to the 23S rRNA. The sequence is that of Large ribosomal subunit protein bL9 from Pseudomonas savastanoi pv. phaseolicola (strain 1448A / Race 6) (Pseudomonas syringae pv. phaseolicola (strain 1448A / Race 6)).